A 294-amino-acid chain; its full sequence is Aquaporin-B (294 aa).

Residues 1–31 (MSLKRSDDYQDLEEGIAMEDGGNIKDEEEKP) form a disordered region. The Cytoplasmic portion of the chain corresponds to 1 to 42 (MSLKRSDDYQDLEEGIAMEDGGNIKDEEEKPLDPIEEQNKKR). Residues 22-31 (GNIKDEEEKP) show a composition bias toward basic and acidic residues. A helical membrane pass occupies residues 43-63 (WVLIRAVLGELLCTFLFVYVL). The Extracellular portion of the chain corresponds to 64 to 79 (CATSANFIRLGSPPNP). O-linked (GalNAc...) serine glycosylation is present at serine 75. Residues 80–100 (VVGGLSTGFAAVALIYSFADV) form a helical membrane-spanning segment. Residues 101 to 123 (SGAHFNPAVTFATCVTRKTSITK) lie on the Cytoplasmic side of the membrane. The short motif at 106 to 108 (NPA) is the NPA 1 element. The chain crosses the membrane as a helical span at residues 124-144 (GLMYVGAQLVGSVLASLILLA). Residues 145 to 172 (TFPGNFPGDKNAASAVAIAPSTDANIGN) lie on the Extracellular side of the membrane. A helical transmembrane segment spans residues 173–193 (AFLTELVLTFILVYVIFAVAF). The Cytoplasmic segment spans residues 194 to 224 (DTVDNSVKTKVVGKSSSNNLTIYTTSGQTKA). The required for water permeability stretch occupies residues 208–219 (SSSNNLTIYTTS). A helical transmembrane segment spans residues 225–245 (GFAPIAIGFTLGFLCFLGGSV). At 246-268 (SGGAFNPARVFGTALVGNNWTRH) the chain is on the extracellular side. The NPA 2 motif lies at 251 to 253 (NPA). A helical transmembrane segment spans residues 269–289 (WMYWIADFLGAGLAGFAQKFF). The Cytoplasmic portion of the chain corresponds to 290 to 294 (SSTHK).

The protein belongs to the MIP/aquaporin (TC 1.A.8) family. Glycosylated and non-glycosylated forms exist throughout all developmental stages.

The protein resides in the cell membrane. The protein localises to the cytoplasmic vesicle. Functionally, putatively gated water-specific channel, requiring a cysteine residue within the channel. Impermeable to water, glycerol and urea when expressed in Xenopus oocytes. Not regulated by pH; channels remain impermeable to water at pH 7.4 and 5.2. This Dictyostelium discoideum (Social amoeba) protein is Aquaporin-B.